We begin with the raw amino-acid sequence, 362 residues long: MKRTIMTNTDTFEQPNTGANEESLRMVSAAPVGNEPVSDEELRPHILEGFIGQPRLKAQLQLFLDAARKRDVPPDHILLAGPPGLGKTTLAMIVANELEVPIRVTSGPAIQHAGDLASILSSLDAGEVLFIDEIHRLPRAAEELLYIAMEDFRVDVMVGKGPGASSIPLTLPRFTVIGATTREGMLPSPLRARFGFTAHLDFYPHEELEKLIERSSAVLGIQLEDGAARQLAMRSRGTPRIANRLLRRVRDWAIVHDLESVRPDDVKEALALYQIDTEGLDRLDIAVLKAIVTNFNGGPVGLNNLAAMVGEESETVETVCEPYLVREGFLIRTPKGRVATRKAWEHLGITPDESAYDVNEMS.

Residues 1–20 (MKRTIMTNTDTFEQPNTGAN) form a disordered region. The tract at residues 15–203 (PNTGANEESL…FGFTAHLDFY (189 aa)) is large ATPase domain (RuvB-L). Residues L42, R43, G84, K87, T88, T89, 150–152 (EDF), R193, Y203, and R240 contribute to the ATP site. T88 provides a ligand contact to Mg(2+). The interval 204 to 274 (PHEELEKLIE…DVKEALALYQ (71 aa)) is small ATPAse domain (RuvB-S). Residues 277–362 (TEGLDRLDIA…ESAYDVNEMS (86 aa)) form a head domain (RuvB-H) region. R332 and R337 together coordinate DNA.

Belongs to the RuvB family. In terms of assembly, homohexamer. Forms an RuvA(8)-RuvB(12)-Holliday junction (HJ) complex. HJ DNA is sandwiched between 2 RuvA tetramers; dsDNA enters through RuvA and exits via RuvB. An RuvB hexamer assembles on each DNA strand where it exits the tetramer. Each RuvB hexamer is contacted by two RuvA subunits (via domain III) on 2 adjacent RuvB subunits; this complex drives branch migration. In the full resolvosome a probable DNA-RuvA(4)-RuvB(12)-RuvC(2) complex forms which resolves the HJ.

The protein resides in the cytoplasm. The catalysed reaction is ATP + H2O = ADP + phosphate + H(+). Its function is as follows. The RuvA-RuvB-RuvC complex processes Holliday junction (HJ) DNA during genetic recombination and DNA repair, while the RuvA-RuvB complex plays an important role in the rescue of blocked DNA replication forks via replication fork reversal (RFR). RuvA specifically binds to HJ cruciform DNA, conferring on it an open structure. The RuvB hexamer acts as an ATP-dependent pump, pulling dsDNA into and through the RuvAB complex. RuvB forms 2 homohexamers on either side of HJ DNA bound by 1 or 2 RuvA tetramers; 4 subunits per hexamer contact DNA at a time. Coordinated motions by a converter formed by DNA-disengaged RuvB subunits stimulates ATP hydrolysis and nucleotide exchange. Immobilization of the converter enables RuvB to convert the ATP-contained energy into a lever motion, pulling 2 nucleotides of DNA out of the RuvA tetramer per ATP hydrolyzed, thus driving DNA branch migration. The RuvB motors rotate together with the DNA substrate, which together with the progressing nucleotide cycle form the mechanistic basis for DNA recombination by continuous HJ branch migration. Branch migration allows RuvC to scan DNA until it finds its consensus sequence, where it cleaves and resolves cruciform DNA. The chain is Holliday junction branch migration complex subunit RuvB from Bifidobacterium adolescentis (strain ATCC 15703 / DSM 20083 / NCTC 11814 / E194a).